Reading from the N-terminus, the 677-residue chain is DNA-directed RNA polymerase subunit beta' (677 aa).

4 residues coordinate Zn(2+): Cys-69, Cys-71, Cys-87, and Cys-90. 3 residues coordinate Mg(2+): Asp-489, Asp-491, and Asp-493.

Belongs to the RNA polymerase beta' chain family. RpoC1 subfamily. In plastids the minimal PEP RNA polymerase catalytic core is composed of four subunits: alpha, beta, beta', and beta''. When a (nuclear-encoded) sigma factor is associated with the core the holoenzyme is formed, which can initiate transcription. Mg(2+) serves as cofactor. Zn(2+) is required as a cofactor.

It is found in the plastid. The protein resides in the chloroplast. The enzyme catalyses RNA(n) + a ribonucleoside 5'-triphosphate = RNA(n+1) + diphosphate. Its function is as follows. DNA-dependent RNA polymerase catalyzes the transcription of DNA into RNA using the four ribonucleoside triphosphates as substrates. In Spinacia oleracea (Spinach), this protein is DNA-directed RNA polymerase subunit beta'.